A 570-amino-acid chain; its full sequence is Protein HEATR9 (570 aa).

In Macaca fascicularis (Crab-eating macaque), this protein is Protein HEATR9 (HEATR9).